Consider the following 174-residue polypeptide: Protein GrpE (174 aa).

Residues 1 to 35 (MAQDIKNEEVEEVQEEEVVETAEETTPEKSELDLA) form a disordered region. The span at 9-25 (EVEEVQEEEVVETAEET) shows a compositional bias: acidic residues. Residues 26–35 (TPEKSELDLA) are compositionally biased toward basic and acidic residues.

It belongs to the GrpE family. In terms of assembly, homodimer.

The protein resides in the cytoplasm. Functionally, participates actively in the response to hyperosmotic and heat shock by preventing the aggregation of stress-denatured proteins, in association with DnaK and GrpE. It is the nucleotide exchange factor for DnaK and may function as a thermosensor. Unfolded proteins bind initially to DnaJ; upon interaction with the DnaJ-bound protein, DnaK hydrolyzes its bound ATP, resulting in the formation of a stable complex. GrpE releases ADP from DnaK; ATP binding to DnaK triggers the release of the substrate protein, thus completing the reaction cycle. Several rounds of ATP-dependent interactions between DnaJ, DnaK and GrpE are required for fully efficient folding. This Streptococcus pneumoniae (strain ATCC BAA-255 / R6) protein is Protein GrpE.